A 353-amino-acid chain; its full sequence is Methylthioribose-1-phosphate isomerase (353 aa).

Residues 51–53, Arg-94, and Gln-199 contribute to the substrate site; that span reads RGA. The active-site Proton donor is Asp-240. Position 250 to 251 (250 to 251) interacts with substrate; the sequence is NK.

Belongs to the eIF-2B alpha/beta/delta subunits family. MtnA subfamily. In terms of assembly, homodimer.

It carries out the reaction 5-(methylsulfanyl)-alpha-D-ribose 1-phosphate = 5-(methylsulfanyl)-D-ribulose 1-phosphate. The protein operates within amino-acid biosynthesis; L-methionine biosynthesis via salvage pathway; L-methionine from S-methyl-5-thio-alpha-D-ribose 1-phosphate: step 1/6. Its function is as follows. Catalyzes the interconversion of methylthioribose-1-phosphate (MTR-1-P) into methylthioribulose-1-phosphate (MTRu-1-P). This Bacillus licheniformis (strain ATCC 14580 / DSM 13 / JCM 2505 / CCUG 7422 / NBRC 12200 / NCIMB 9375 / NCTC 10341 / NRRL NRS-1264 / Gibson 46) protein is Methylthioribose-1-phosphate isomerase.